Here is a 609-residue protein sequence, read N- to C-terminus: Zinc metalloproteinase-disintegrin-like VMP-III (609 aa).

The first 20 residues, 1-20 (MIQVLLVTICLAAFPYQGSS), serve as a signal peptide directing secretion. The propeptide occupies 21-189 (IILESGNVND…KKASQLVVTA (169 aa)). The Peptidase M12B domain occupies 198–393 (RFVELFLVVD…HNPECILNEP (196 aa)). The Ca(2+) site is built by Glu-201 and Asp-285. 3 disulfide bridges follow: Cys-308/Cys-388, Cys-348/Cys-372, and Cys-350/Cys-355. Position 333 (His-333) interacts with Zn(2+). Residue Glu-334 is part of the active site. Zn(2+) contacts are provided by His-337 and His-343. A glycan (N-linked (GlcNAc...) asparagine) is linked at Asn-371. Cys-388, Asn-391, Val-403, Asn-406, Leu-408, Glu-410, Glu-413, and Asp-416 together coordinate Ca(2+). The region spanning 401 to 487 (PPVCGNELLE…ECPADVFHKN (87 aa)) is the Disintegrin domain. 14 disulfide bridges follow: Cys-404-Cys-433, Cys-415-Cys-428, Cys-417-Cys-423, Cys-427-Cys-450, Cys-441-Cys-447, Cys-446-Cys-472, Cys-459-Cys-479, Cys-466-Cys-498, Cys-491-Cys-503, Cys-510-Cys-560, Cys-525-Cys-571, Cys-538-Cys-548, Cys-555-Cys-597, and Cys-591-Cys-602. The short motif at 465-467 (ECD) is the D/ECD-tripeptide element. Asp-467, Pro-468, Glu-470, Asp-482, and Val-483 together coordinate Ca(2+).

This sequence belongs to the venom metalloproteinase (M12B) family. P-III subfamily. P-IIIa sub-subfamily. As to quaternary structure, monomer. Requires Zn(2+) as cofactor. As to expression, expressed by the venom gland.

The protein resides in the secreted. Snake venom metalloproteinase that impairs hemostasis in the envenomed animal. This chain is Zinc metalloproteinase-disintegrin-like VMP-III, found in Crotalus viridis viridis (Prairie rattlesnake).